Consider the following 371-residue polypeptide: MSL complex subunit 3B (371 aa).

Disordered stretches follow at residues 1-47 and 160-230; these read MATL…DERA and EERA…PQAK. The span at 8–47 shows a compositional bias: basic and acidic residues; that stretch reads PKDDGEGKDEGGSDRGDGDSKPKGKKEVEPHTRREADERA. The 324-residue stretch at 44–367 folds into the MRG domain; that stretch reads DERAMRIPIP…CEAHYSSKNP (324 aa). The segment covering 183 to 193 has biased composition (low complexity); sequence SESQAVAGPAA. The span at 206–216 shows a compositional bias: basic residues; the sequence is APRRSTRHSTH.

It is found in the nucleus. Functionally, probable non-catalytic component of the MSL histone acetyltransferase complex, a multiprotein complex that mediates the majority of histone H4 acetylation at 'Lys-16' (H4K16ac), an epigenetic mark that prevents chromatin compaction. This chain is MSL complex subunit 3B, found in Mus musculus (Mouse).